A 514-amino-acid chain; its full sequence is Ammonium transporter 1 member 2 (514 aa).

A run of 11 helical transmembrane segments spans residues 56 to 76, 91 to 111, 140 to 160, 165 to 185, 212 to 232, 257 to 277, 291 to 313, 328 to 348, 351 to 371, 380 to 400, and 431 to 451; these read LLFS…LCAG, VLDA…FAFG, FFLY…GSIA, FVAY…TVSH, FAGS…GALV, VVLG…GSFL, GQWS…AALT, IDVC…CAVV, WAAI…NLLA, LEAA…TGLF, and IVQI…LFYG. Threonine 472 bears the Phosphothreonine mark.

This sequence belongs to the ammonia transporter channel (TC 1.A.11.2) family. As to expression, high expression in root.

It is found in the membrane. In terms of biological role, ammonium transporter probably involved in ammonium uptake from the soil. The sequence is that of Ammonium transporter 1 member 2 (AMT1-2) from Arabidopsis thaliana (Mouse-ear cress).